The sequence spans 466 residues: E3 SUMO-protein ligase TRIM60 (466 aa).

The RING-type zinc-finger motif lies at 15–56 (CYICSDFMEDPVTSRCGHNFCFACLRLLWDDLQGNIFCPVCQ). A B box-type zinc finger spans residues 91-132 (EEHTVCPKHDQPLVLFCVRDRDVLCTQCSLSVEHQGHYTCPI). Zn(2+) is bound by residues C96, H99, C118, and H124. Residues 171–223 (LREEAQYQKIEIRYEIGQIKLFLQSEYEAHLNESHMEELRSFSELNGYLETLL) adopt a coiled-coil conformation. The region spanning 272 to 462 (LSLPAQYSGL…LEILTHPTPD (191 aa)) is the B30.2/SPRY domain.

This sequence belongs to the TRIM/RBCC family.

Its function is as follows. E3 SUMO-protein ligase that mediates SUMOylation of TAB2 leading to inhibition of NF-kappa-B and MAPK pathways by suppressing the TRAF6/TAB2/TAK1 complex. This is E3 SUMO-protein ligase TRIM60 (Trim60) from Mus musculus (Mouse).